An 87-amino-acid polypeptide reads, in one-letter code: CRISPR-associated endoribonuclease Cas2 (87 aa).

Residue aspartate 8 coordinates Mg(2+).

Belongs to the CRISPR-associated endoribonuclease Cas2 protein family. In terms of assembly, homodimer, forms a heterotetramer with a Cas1 homodimer. Mg(2+) is required as a cofactor.

Functionally, CRISPR (clustered regularly interspaced short palindromic repeat), is an adaptive immune system that provides protection against mobile genetic elements (viruses, transposable elements and conjugative plasmids). CRISPR clusters contain sequences complementary to antecedent mobile elements and target invading nucleic acids. CRISPR clusters are transcribed and processed into CRISPR RNA (crRNA). Functions as a ssRNA-specific endoribonuclease. Involved in the integration of spacer DNA into the CRISPR cassette. This is CRISPR-associated endoribonuclease Cas2 from Frankia alni (strain DSM 45986 / CECT 9034 / ACN14a).